Consider the following 324-residue polypeptide: MFTTAFAQREQTQPGGLPLDLFAAIESLKKELNAVILAHYYQEPDIQDIADFIGDSLQLARAAAQTNADVIVFAGVHFMAETAKILNPEKLVLLPDLNAGCSLADSCPPKEFAAFKAAHPDHLVVSYINCSAEIKAMSDIICTSSNAVKIVQQIPKEQPIIFAPDRNLGRYVMEQTGRDLVLWQGSCLVHETFSEKKIVQLKVAHPQAEAIAHPECESSVLRHASFIGSTAALLQYCQTSPSQEFIVATEPGIIHQMQKLAPNKHFIPAPPINNCACNECPFMRLNTLEKLYWAMKNRTPEITMSEDIRLAALRPMQRMLEMSN.

Positions 39 and 56 each coordinate iminosuccinate. Cysteine 101 contacts [4Fe-4S] cluster. Iminosuccinate contacts are provided by residues 127 to 129 (YIN) and serine 144. Cysteine 187 contributes to the [4Fe-4S] cluster binding site. Residues 213–215 (HPE) and threonine 230 contribute to the iminosuccinate site. Cysteine 280 lines the [4Fe-4S] cluster pocket.

The protein belongs to the quinolinate synthase family. Type 2 subfamily. [4Fe-4S] cluster is required as a cofactor.

Its subcellular location is the cytoplasm. The enzyme catalyses iminosuccinate + dihydroxyacetone phosphate = quinolinate + phosphate + 2 H2O + H(+). The protein operates within cofactor biosynthesis; NAD(+) biosynthesis; quinolinate from iminoaspartate: step 1/1. In terms of biological role, catalyzes the condensation of iminoaspartate with dihydroxyacetone phosphate to form quinolinate. The polypeptide is Quinolinate synthase (Nostoc sp. (strain PCC 7120 / SAG 25.82 / UTEX 2576)).